Reading from the N-terminus, the 728-residue chain is Probable ubiquitin-conjugating enzyme protein 17 (728 aa).

A compositionally biased stretch (low complexity) spans 1-17 (MSSQASQRSSSTSAVAQ). 2 disordered regions span residues 1 to 23 (MSSQ…RERR) and 123 to 155 (SSRS…GSTR). The 167-residue stretch at 402 to 568 (DRTKRIAKEL…IEHATLNYAI (167 aa)) folds into the UBC core domain. The active-site Glycyl thioester intermediate is the Cys-495. Disordered regions lie at residues 649-678 (PFAK…EAAA) and 709-728 (RTQP…STSS). A compositionally biased stretch (basic and acidic residues) spans 658–678 (SERLKREQSEKEEKQKKEAAA). The segment covering 710 to 728 (TQPTGDYSVPSVNEPSTSS) has biased composition (polar residues).

This sequence belongs to the ubiquitin-conjugating enzyme family.

The chain is Probable ubiquitin-conjugating enzyme protein 17 (ubc-17) from Caenorhabditis elegans.